Reading from the N-terminus, the 418-residue chain is Tyrosine--tRNA ligase (418 aa).

An L-tyrosine-binding site is contributed by Tyr-34. The 'HIGH' region motif lies at 39-48 (PTADSLHLGH). L-tyrosine-binding residues include Tyr-169 and Gln-173. The 'KMSKS' region motif lies at 229–233 (KFGKS). Lys-232 contributes to the ATP binding site. In terms of domain architecture, S4 RNA-binding spans 352–418 (LNLVDMLVTA…GKKKYAVLTY (67 aa)).

This sequence belongs to the class-I aminoacyl-tRNA synthetase family. TyrS type 1 subfamily. Homodimer.

Its subcellular location is the cytoplasm. The enzyme catalyses tRNA(Tyr) + L-tyrosine + ATP = L-tyrosyl-tRNA(Tyr) + AMP + diphosphate + H(+). Catalyzes the attachment of tyrosine to tRNA(Tyr) in a two-step reaction: tyrosine is first activated by ATP to form Tyr-AMP and then transferred to the acceptor end of tRNA(Tyr). The polypeptide is Tyrosine--tRNA ligase (Streptococcus pyogenes serotype M6 (strain ATCC BAA-946 / MGAS10394)).